The chain runs to 180 residues: NAD(P)H-quinone oxidoreductase subunit I, chloroplastic (180 aa).

4Fe-4S ferredoxin-type domains are found at residues 55 to 84 and 95 to 124; these read GRIH…VDWR and LNYS…MTEE. 8 residues coordinate [4Fe-4S] cluster: Cys64, Cys67, Cys70, Cys74, Cys104, Cys107, Cys110, and Cys114.

The protein belongs to the complex I 23 kDa subunit family. NDH is composed of at least 16 different subunits, 5 of which are encoded in the nucleus. Requires [4Fe-4S] cluster as cofactor.

Its subcellular location is the plastid. The protein resides in the chloroplast thylakoid membrane. It carries out the reaction a plastoquinone + NADH + (n+1) H(+)(in) = a plastoquinol + NAD(+) + n H(+)(out). The catalysed reaction is a plastoquinone + NADPH + (n+1) H(+)(in) = a plastoquinol + NADP(+) + n H(+)(out). NDH shuttles electrons from NAD(P)H:plastoquinone, via FMN and iron-sulfur (Fe-S) centers, to quinones in the photosynthetic chain and possibly in a chloroplast respiratory chain. The immediate electron acceptor for the enzyme in this species is believed to be plastoquinone. Couples the redox reaction to proton translocation, and thus conserves the redox energy in a proton gradient. The sequence is that of NAD(P)H-quinone oxidoreductase subunit I, chloroplastic from Agrostis stolonifera (Creeping bentgrass).